The chain runs to 468 residues: Glutamine synthetase (468 aa).

One can recognise a GS beta-grasp domain in the interval 11–96 (HDVKWIDLRF…LVCDIIEPST (86 aa)). The region spanning 104–468 (PRAIAHRAEE…PLEYELYYSC (365 aa)) is the GS catalytic domain. 2 residues coordinate Mg(2+): E129 and E131. E207 is a binding site for ATP. Residues E212 and E220 each contribute to the Mg(2+) site. L-glutamate-binding positions include 264-265 (NG) and G265. H269 contributes to the Mg(2+) binding site. Residues 271 to 273 (HMS) and S273 each bind ATP. The L-glutamate site is built by R321, E327, and R339. Residues R339, R344, and R352 each contribute to the ATP site. E357 contributes to the Mg(2+) binding site. Position 359 (R359) interacts with L-glutamate. An O-AMP-tyrosine modification is found at Y397.

The protein belongs to the glutamine synthetase family. Oligomer of 12 subunits arranged in the form of two hexagons. Mg(2+) serves as cofactor. It depends on Mn(2+) as a cofactor.

The enzyme catalyses L-glutamate + NH4(+) + ATP = L-glutamine + ADP + phosphate + H(+). When cellular nitrogen levels are high, the C-terminal adenylyl transferase (AT) of GlnE inhibits GlnA by covalent transfer of an adenylyl group from ATP to Tyr-397. Conversely, when nitrogen levels are low, the N-terminal adenylyl removase (AR) of GlnE activates GlnA by removing the adenylyl group by phosphorolysis. The fully adenylated enzyme complex is inactive. Catalyzes the formation of glutamine from glutamate and ammonia. In vitro, can also use hydroxylamine, methylamine and ethylamine, with 32%, 7% and 1% activity compared to ammonia, respectively. The sequence is that of Glutamine synthetase from Pseudomonas taetrolens.